A 104-amino-acid polypeptide reads, in one-letter code: Large ribosomal subunit protein uL24 (104 aa).

Belongs to the universal ribosomal protein uL24 family. As to quaternary structure, part of the 50S ribosomal subunit.

Functionally, one of two assembly initiator proteins, it binds directly to the 5'-end of the 23S rRNA, where it nucleates assembly of the 50S subunit. In terms of biological role, one of the proteins that surrounds the polypeptide exit tunnel on the outside of the subunit. The sequence is that of Large ribosomal subunit protein uL24 from Proteus mirabilis (strain HI4320).